Here is a 677-residue protein sequence, read N- to C-terminus: Secretogranin-1 (677 aa).

Positions Met1 to Ser20 are cleaved as a signal peptide. An intrachain disulfide couples Cys36 to Cys57. Disordered regions lie at residues Lys63–Glu505 and Asn531–Thr558. Over residues Ser64 to Ala90 the composition is skewed to basic and acidic residues. A phosphoserine mark is found at Ser93, Ser99, and Ser100. The O-linked (Xyl...) (chondroitin sulfate) serine glycan is linked to Ser93. Thr115 carries an O-linked (GalNAc...) threonine glycan. Basic and acidic residues predominate over residues Gly118–Val133. Residues Ser129, Ser147, Ser190, and Ser220 each carry the phosphoserine modification. Basic and acidic residues-rich tracts occupy residues Lys148–Glu192 and Lys200–Glu249. O-linked (Xyl...) (chondroitin sulfate) serine glycosylation occurs at Ser237. A compositionally biased stretch (acidic residues) spans Thr251–Ala280. Ser256, Ser260, Ser300, Ser301, Ser318, and Ser342 each carry phosphoserine. The span at Pro306–Asp322 shows a compositional bias: basic and acidic residues. The residue at position 348 (Tyr348) is a Sulfotyrosine. Basic and acidic residues-rich tracts occupy residues Arg363–Tyr409 and Gly421–Lys455. Phosphoserine is present on residues Ser365, Ser375, and Ser378. A Sulfotyrosine modification is found at Tyr472. The span at Glu491–Tyr504 shows a compositional bias: basic and acidic residues. Ser493, Ser532, and Ser543 each carry phosphoserine. Residues Tyr566 and Tyr624 each carry the sulfotyrosine modification. Residues Asp622–Arg646 form a disordered region. At Ser626 the chain carries Phosphoserine. Positions Glu635–Arg646 are enriched in basic and acidic residues.

Belongs to the chromogranin/secretogranin protein family. As to quaternary structure, interacts with ITPR1 in the secretory granules.

The protein localises to the secreted. Its function is as follows. Secretogranin-1 is a neuroendocrine secretory granule protein, which may be the precursor for other biologically active peptides. The sequence is that of Secretogranin-1 (Chgb) from Mus musculus (Mouse).